We begin with the raw amino-acid sequence, 198 residues long: Putative protein-methionine-sulfoxide reductase subunit YedZ1 (198 aa).

Transmembrane regions (helical) follow at residues 12 to 32 (WLRV…MSGW), 63 to 83 (FAAM…NIFS), 124 to 144 (AAYL…LVLW), and 167 to 187 (FIGM…VALV).

This sequence belongs to the HupC/HyaC/HydC family.

The protein localises to the cell inner membrane. In terms of biological role, part of the YedY1-YedZ1 system that may repair oxidized proteins containing methionine sulfoxide residues (Met-O). This is Putative protein-methionine-sulfoxide reductase subunit YedZ1 from Azospira oryzae (strain ATCC BAA-33 / DSM 13638 / PS) (Dechlorosoma suillum).